Consider the following 231-residue polypeptide: Phosphatidylserine decarboxylase proenzyme (231 aa).

The Schiff-base intermediate with substrate; via pyruvic acid role is filled by Ser-188. Position 188 is a pyruvic acid (Ser); by autocatalysis (Ser-188).

This sequence belongs to the phosphatidylserine decarboxylase family. PSD-A subfamily. As to quaternary structure, heterodimer of a large membrane-associated beta subunit and a small pyruvoyl-containing alpha subunit. The cofactor is pyruvate. Post-translationally, is synthesized initially as an inactive proenzyme. Formation of the active enzyme involves a self-maturation process in which the active site pyruvoyl group is generated from an internal serine residue via an autocatalytic post-translational modification. Two non-identical subunits are generated from the proenzyme in this reaction, and the pyruvate is formed at the N-terminus of the alpha chain, which is derived from the carboxyl end of the proenzyme. The post-translation cleavage follows an unusual pathway, termed non-hydrolytic serinolysis, in which the side chain hydroxyl group of the serine supplies its oxygen atom to form the C-terminus of the beta chain, while the remainder of the serine residue undergoes an oxidative deamination to produce ammonia and the pyruvoyl prosthetic group on the alpha chain.

It localises to the cell membrane. It catalyses the reaction a 1,2-diacyl-sn-glycero-3-phospho-L-serine + H(+) = a 1,2-diacyl-sn-glycero-3-phosphoethanolamine + CO2. Its pathway is phospholipid metabolism; phosphatidylethanolamine biosynthesis; phosphatidylethanolamine from CDP-diacylglycerol: step 2/2. In terms of biological role, catalyzes the formation of phosphatidylethanolamine (PtdEtn) from phosphatidylserine (PtdSer). This is Phosphatidylserine decarboxylase proenzyme from Rickettsia felis (strain ATCC VR-1525 / URRWXCal2) (Rickettsia azadi).